Consider the following 259-residue polypeptide: tRNA (guanine-N(7)-)-methyltransferase (259 aa).

S-adenosyl-L-methionine contacts are provided by residues Gly80, 103 to 104 (EL), 136 to 137 (NS), and Leu156. Residue Asp159 is part of the active site. Residue 234-236 (TEE) coordinates S-adenosyl-L-methionine.

Belongs to the class I-like SAM-binding methyltransferase superfamily. TrmB family.

The protein localises to the nucleus. It carries out the reaction guanosine(46) in tRNA + S-adenosyl-L-methionine = N(7)-methylguanosine(46) in tRNA + S-adenosyl-L-homocysteine. It functions in the pathway tRNA modification; N(7)-methylguanine-tRNA biosynthesis. Functionally, catalyzes the formation of N(7)-methylguanine at position 46 (m7G46) in tRNA. This Oryza sativa subsp. indica (Rice) protein is tRNA (guanine-N(7)-)-methyltransferase.